We begin with the raw amino-acid sequence, 75 residues long: Small ribosomal subunit protein bS16 (75 aa).

Belongs to the bacterial ribosomal protein bS16 family.

This Campylobacter fetus subsp. fetus (strain 82-40) protein is Small ribosomal subunit protein bS16.